Here is a 426-residue protein sequence, read N- to C-terminus: Na(+)/H(+) antiporter 1 (426 aa).

Transmembrane regions (helical) follow at residues 1 to 21 (MELM…SLVA), 29 to 49 (IPDI…LQII), 57 to 77 (IFEY…AFTM), 95 to 115 (ITFL…LNLP), 120 to 140 (VGYL…IPVF), 158 to 178 (IFND…FGLF), 184 to 204 (LIDL…LAKI), 208 to 228 (IIIH…GAML), 236 to 256 (LLPS…IMGL), 286 to 306 (VFIF…NYFI), 309 to 329 (LLVA…LGLI), and 382 to 402 (IAGT…ILEA).

The protein belongs to the monovalent cation:proton antiporter 1 (CPA1) transporter (TC 2.A.36) family.

Its subcellular location is the cell membrane. Functionally, this is a Na(+)/H(+) antiporter. Can also transport lithium. The sequence is that of Na(+)/H(+) antiporter 1 from Methanocaldococcus jannaschii (strain ATCC 43067 / DSM 2661 / JAL-1 / JCM 10045 / NBRC 100440) (Methanococcus jannaschii).